The chain runs to 278 residues: HTH-type transcriptional activator RhaS (278 aa).

The region spanning 174 to 272 is the HTH araC/xylS-type domain; it reads NLLLAWLEDH…NWSPRDIRQG (99 aa). DNA-binding regions (H-T-H motif) lie at residues 191–212 and 239–262; these read DAVADQFSLSLRTLHRQLKQKT and VTDIAYRCGFSDSNHFSTLFRREF.

Binds DNA as a dimer.

The protein resides in the cytoplasm. Activates expression of the rhaBAD and rhaT operons. This chain is HTH-type transcriptional activator RhaS, found in Escherichia coli O45:K1 (strain S88 / ExPEC).